The primary structure comprises 177 residues: Large ribosomal subunit protein uL6 (177 aa).

It belongs to the universal ribosomal protein uL6 family. Part of the 50S ribosomal subunit.

In terms of biological role, this protein binds to the 23S rRNA, and is important in its secondary structure. It is located near the subunit interface in the base of the L7/L12 stalk, and near the tRNA binding site of the peptidyltransferase center. The polypeptide is Large ribosomal subunit protein uL6 (Psychrobacter arcticus (strain DSM 17307 / VKM B-2377 / 273-4)).